Consider the following 768-residue polypeptide: Tripartite motif-containing protein 67 (768 aa).

The segment at 7 to 42 (CPVCGSLFREPIILPCSHNVCLPCARTIAVQTPDGE) adopts an RING-type; degenerate zinc-finger fold. Residues 55–70 (AAAAATPPDQDAAAGA) are compositionally biased toward low complexity. 2 disordered regions span residues 55-74 (AAAAATPPDQDAAAGATSGG) and 247-284 (QPPPPPTPPEATPAVTGTSTASSAGGCRSPGGAGASAP). A B box-type 1; degenerate zinc finger spans residues 201–248 (AICQLCDRTPPEPAATLCEQCDVLYCATCQLKCHPSRGPFAKHRLVQP). Residues 247–257 (QPPPPPTPPEA) are compositionally biased toward pro residues. The B box-type 2 zinc-finger motif lies at 285-327 (RKFPTCPEHEMENYSMYCVSCRSPVCYMCLEEGRHSKHEVKPL). Residues C290, H293, C313, and H319 each contribute to the Zn(2+) site. A coiled-coil region spans residues 332–369 (KQHKAQLSQALNGVSDKAKEAKEFLVQLKNILQQIQEN). The COS domain occupies 435–493 (IKEDDPSGFLQISDALIKRVQTSQEQWVKGALEPKVSAEFDLTLDSEPLLQAIHQLDFV). The Fibronectin type-III domain occupies 498-592 (PPVPLLQLEK…KTVVLQTSDV (95 aa)). Residues 574 to 765 (NSSGVGPYSK…VPTNLGRPKL (192 aa)) form the B30.2/SPRY domain.

Its subcellular location is the cytoplasm. It localises to the cytoskeleton. This Mus musculus (Mouse) protein is Tripartite motif-containing protein 67 (Trim67).